The sequence spans 230 residues: RNA chaperone ProQ (230 aa).

The segment at 106-181 (AKARVQAQRA…EERHTPVSDI (76 aa)) is disordered. Positions 146 to 155 (RRKDNAERKP) are enriched in basic and acidic residues. Residues 158–167 (AKPAAAAKPS) are compositionally biased toward low complexity.

The protein belongs to the ProQ family.

The protein resides in the cytoplasm. In terms of biological role, RNA chaperone with significant RNA binding, RNA strand exchange and RNA duplexing activities. May regulate ProP activity through an RNA-based, post-transcriptional mechanism. The protein is RNA chaperone ProQ of Cronobacter sakazakii (strain ATCC BAA-894) (Enterobacter sakazakii).